The sequence spans 754 residues: 5-methyltetrahydropteroyltriglutamate--homocysteine methyltransferase (754 aa).

5-methyltetrahydropteroyltri-L-glutamate-binding positions include Arg17–Lys20 and Lys117. L-homocysteine-binding positions include Ile431–Ser433 and Glu484. L-methionine is bound by residues Ile431–Ser433 and Glu484. Residues Arg515–Cys516 and Trp561 contribute to the 5-methyltetrahydropteroyltri-L-glutamate site. Asp599 is a binding site for L-homocysteine. Asp599 lines the L-methionine pocket. Residue Glu605 participates in 5-methyltetrahydropteroyltri-L-glutamate binding. Positions 641, 643, and 665 each coordinate Zn(2+). The active-site Proton donor is the His694. Cys726 serves as a coordination point for Zn(2+).

Belongs to the vitamin-B12 independent methionine synthase family. The cofactor is Zn(2+).

The enzyme catalyses 5-methyltetrahydropteroyltri-L-glutamate + L-homocysteine = tetrahydropteroyltri-L-glutamate + L-methionine. The protein operates within amino-acid biosynthesis; L-methionine biosynthesis via de novo pathway; L-methionine from L-homocysteine (MetE route): step 1/1. Catalyzes the transfer of a methyl group from 5-methyltetrahydrofolate to homocysteine resulting in methionine formation. The protein is 5-methyltetrahydropteroyltriglutamate--homocysteine methyltransferase of Salmonella typhimurium (strain LT2 / SGSC1412 / ATCC 700720).